Reading from the N-terminus, the 3068-residue chain is Highly reducing polyketide synthase 17 (3068 aa).

Residues 100–526 (IEPIAIVGAS…GTNAHAIMER (427 aa)) enclose the Ketosynthase family 3 (KS3) domain. Catalysis depends on for beta-ketoacyl synthase activity residues cysteine 274, histidine 410, and histidine 449. A malonyl-CoA:ACP transacylase (MAT) domain region spans residues 627–938 (YVFTGQGAQW…LAGPIRQCLA (312 aa)). The active-site For malonyltransferase activity is serine 721. The tract at residues 1027–1160 (HHLLGVRMTE…GVVEGVMTLD (134 aa)) is N-terminal hotdog fold. A dehydratase (DH) domain region spans residues 1027 to 1311 (HHLLGVRMTE…RASNIDMTIV (285 aa)). In terms of domain architecture, PKS/mFAS DH spans 1027–1334 (HHLLGVRMTE…SRSLAAHVDG (308 aa)). The active-site Proton acceptor; for dehydratase activity is the histidine 1059. The segment at 1179–1334 (NRTMVIPEEL…SRSLAAHVDG (156 aa)) is C-terminal hotdog fold. Aspartate 1247 serves as the catalytic Proton donor; for dehydratase activity. The segment at 1735–2037 (LGPVQSSKGD…LVRQGGKVIL (303 aa)) is enoylreductase (ER) domain. Residues 2062–2240 (AAYVVAGGMG…FLSMNIGWIE (179 aa)) are catalytic ketoreductase (KR) domain. A Carrier domain is found at 2345–2423 (TIIDFISSAI…DLAEKVASRS (79 aa)). Residue serine 2383 is modified to O-(pantetheine 4'-phosphoryl)serine. The choline/carnitine acyltransferase (cAT) domain stretch occupies residues 2831 to 3062 (FDVASLGLRS…SCMITSLLED (232 aa)).

Its pathway is secondary metabolite biosynthesis. Highly reducing polyketide synthase; part of the gene cluster that mediates the biosynthesis of (2Z,4E,6E,10E)-9-hydroxydodeca-2,4,6,10-tetraenoic acid (BAA), (2E,4E,6E,10E)-9-hydroxydodeca-2,4,6,10-tetraenoic acid (BAB), and (2Z,4E,6E)-octa-2,4,6-trienedioic acid (PBA). The highly reducing polyketide synthase Ba17a is sufficent to produce PBA and BAA. The still to be characterized protein Ba17b leads to an increased production of BAA as well as to the production of the new compound BAB. BAA does not possess insecticidal activity against G.mellonella larvae, however, both BAA and BAB increase the growth of Candida albicans and BAA can mitigate the fungicidal effects of fluconazole over C.albicans, suggesting that generalist pathogens such as M.anisopliae, can potentially manipulate the yeast microbiota found in arthropods (and anywhere else) by the activity of compounds as BAA and BAB. This chain is Highly reducing polyketide synthase 17, found in Metarhizium anisopliae (Entomophthora anisopliae).